Consider the following 601-residue polypeptide: DNA topoisomerase I, mitochondrial (601 aa).

Residues 1–50 (MRVVRLLRLRAALTLLGEVPRRPASRGVPGSRRTQKGSGARWEKEKHEDG) constitute a mitochondrion transit peptide. A disordered region spans residues 22-48 (RPASRGVPGSRRTQKGSGARWEKEKHE). Interaction with DNA stretches follow at residues 261–262 (KY), 324–329 (RAGNEK), and 421–423 (TAK). The Topo IB-type catalytic domain occupies 268–601 (CSKLKGETAW…LAMAGEDFEF (334 aa)). Y559 functions as the O-(3'-phospho-DNA)-tyrosine intermediate in the catalytic mechanism.

The protein belongs to the type IB topoisomerase family. Ca(2+) is required as a cofactor. Mg(2+) serves as cofactor.

It is found in the mitochondrion. The enzyme catalyses ATP-independent breakage of single-stranded DNA, followed by passage and rejoining.. Functionally, releases the supercoiling and torsional tension of DNA introduced during duplication of mitochondrial DNA by transiently cleaving and rejoining one strand of the DNA duplex. Introduces a single-strand break via transesterification at a target site in duplex DNA. The scissile phosphodiester is attacked by the catalytic tyrosine of the enzyme, resulting in the formation of a DNA-(3'-phosphotyrosyl)-enzyme intermediate and the expulsion of a 5'-OH DNA strand. The free DNA strand then rotates around the intact phosphodiester bond on the opposing strand, thus removing DNA supercoils. Finally, in the religation step, the DNA 5'-OH attacks the covalent intermediate to expel the active-site tyrosine and restore the DNA phosphodiester backbone. The chain is DNA topoisomerase I, mitochondrial (TOP1MT) from Pan troglodytes (Chimpanzee).